Consider the following 82-residue polypeptide: UPF0298 protein SMU_1670c (82 aa).

It belongs to the UPF0298 family.

It localises to the cytoplasm. The polypeptide is UPF0298 protein SMU_1670c (Streptococcus mutans serotype c (strain ATCC 700610 / UA159)).